Reading from the N-terminus, the 173-residue chain is Crossover junction endodeoxyribonuclease RuvC (173 aa).

Residues D8, E67, and D139 contribute to the active site. 3 residues coordinate Mg(2+): D8, E67, and D139.

The protein belongs to the RuvC family. In terms of assembly, homodimer which binds Holliday junction (HJ) DNA. The HJ becomes 2-fold symmetrical on binding to RuvC with unstacked arms; it has a different conformation from HJ DNA in complex with RuvA. In the full resolvosome a probable DNA-RuvA(4)-RuvB(12)-RuvC(2) complex forms which resolves the HJ. Mg(2+) is required as a cofactor.

The protein resides in the cytoplasm. The catalysed reaction is Endonucleolytic cleavage at a junction such as a reciprocal single-stranded crossover between two homologous DNA duplexes (Holliday junction).. Its function is as follows. The RuvA-RuvB-RuvC complex processes Holliday junction (HJ) DNA during genetic recombination and DNA repair. Endonuclease that resolves HJ intermediates. Cleaves cruciform DNA by making single-stranded nicks across the HJ at symmetrical positions within the homologous arms, yielding a 5'-phosphate and a 3'-hydroxyl group; requires a central core of homology in the junction. The consensus cleavage sequence is 5'-(A/T)TT(C/G)-3'. Cleavage occurs on the 3'-side of the TT dinucleotide at the point of strand exchange. HJ branch migration catalyzed by RuvA-RuvB allows RuvC to scan DNA until it finds its consensus sequence, where it cleaves and resolves the cruciform DNA. This Shewanella sp. (strain ANA-3) protein is Crossover junction endodeoxyribonuclease RuvC.